The chain runs to 200 residues: Protein GrpE (200 aa).

It belongs to the GrpE family. As to quaternary structure, homodimer.

It is found in the cytoplasm. Participates actively in the response to hyperosmotic and heat shock by preventing the aggregation of stress-denatured proteins, in association with DnaK and GrpE. It is the nucleotide exchange factor for DnaK and may function as a thermosensor. Unfolded proteins bind initially to DnaJ; upon interaction with the DnaJ-bound protein, DnaK hydrolyzes its bound ATP, resulting in the formation of a stable complex. GrpE releases ADP from DnaK; ATP binding to DnaK triggers the release of the substrate protein, thus completing the reaction cycle. Several rounds of ATP-dependent interactions between DnaJ, DnaK and GrpE are required for fully efficient folding. The protein is Protein GrpE of Geobacter sulfurreducens (strain ATCC 51573 / DSM 12127 / PCA).